Reading from the N-terminus, the 348-residue chain is Cyclic AMP-dependent transcription factor ATF-4 (348 aa).

Lys53 is covalently cross-linked (Glycyl lysine isopeptide (Lys-Gly) (interchain with G-Cter in SUMO2)). 2 disordered regions span residues 151–174 (QGAP…TPDH) and 187–265 (PEGD…GEKM). 5 positions are modified to phosphoserine: Ser211, Ser215, Ser220, Ser227, and Ser231. Residues 211–220 (SDNDSGICMS) carry the BetaTrCP degron motif motif. Residues 221–241 (PDSSLGSPQDSPSTSRGSPNK) show a composition bias toward polar residues. Position 232 is a 4-hydroxyproline (Pro232). Phosphoserine is present on residues Ser242 and Ser245. The span at 242-253 (SLLSPGALSGSS) shows a compositional bias: low complexity. Residues Lys256, Lys264, and Lys269 each participate in a glycyl lysine isopeptide (Lys-Gly) (interchain with G-Cter in SUMO2) cross-link. Residues 275-338 (LDKKLKKMEQ…QYLKDQIEEV (64 aa)) form the bZIP domain. The basic motif stretch occupies residues 277-297 (KKLKKMEQNKTAATRYRQKKR). The segment at 302–338 (ALTGECKELEKKNEALKEKADSLAKEIQYLKDQIEEV) is interaction with GABBR1. Residues 303–331 (LTGECKELEKKNEALKEKADSLAKEIQYL) are leucine-zipper. Position 308 is an N6-acetyllysine (Lys308).

This sequence belongs to the bZIP family. As to quaternary structure, binds DNA as a homodimer and as a heterodimer. Heterodimer; heterodimerizes with CEBPB. Heterodimer; heterodimerizes with DDIT3/CHOP. Interacts with CEP290 (via an N-terminal region). Interacts with NEK6, DAPK2 (isoform 2) and ZIPK/DAPK3. Interacts (via its leucine zipper domain) with GABBR1 and GABBR2 (via their C-termini). Forms a heterodimer with TXLNG in osteoblasts. Interacts (via its DNA binding domain) with FOXO1 (C-terminal half); the interaction occurs in osteoblasts and regulates glucose homeostasis through suppression of beta-cell proliferation and a decrease in insulin production. Interacts with SATB2; the interaction results in enhanced DNA binding and transactivation by these transcription factors. Interacts with ABRAXAS2. Interacts with TRIB3, inhibiting the transactivation activity of ATF4. Interacts with DISC1; which inhibits ATF4 transcription factor activity by disrupting ATF4 dimerization and DNA-binding. Interacts with EP300/p300; EP300/p300 stabilizes ATF4 and increases its transcriptional activity independently of its catalytic activity by preventing its ubiquitination. Ubiquitinated by SCF(BTRC) in response to mTORC1 signal, followed by proteasomal degradation and leading to down-regulate expression of SIRT4. Interaction with EP300/p300 inhibits ubiquitination by SCF(BTRC). Post-translationally, phosphorylation at Ser-242 by RPS6KA3/RSK2 in osteoblasts enhances transactivation activity and promotes osteoblast differentiation. Phosphorylated on the betaTrCP degron motif at Ser-215, followed by phosphorylation at Ser-220, Ser-227, Ser-231 and Ser-245, promoting interaction with BTRC and ubiquitination. Phosphorylation is promoted by mTORC1. Phosphorylation at Ser-211 by CK2 decreases its stability. Phosphorylated by NEK6. In terms of processing, hydroxylated by PHD3, leading to decreased protein stability.

The protein localises to the nucleus. It localises to the nucleus speckle. It is found in the cytoplasm. Its subcellular location is the cell membrane. The protein resides in the cytoskeleton. The protein localises to the microtubule organizing center. It localises to the centrosome. Transcription factor that binds the cAMP response element (CRE) (consensus: 5'-GTGACGT[AC][AG]-3') and displays two biological functions, as regulator of metabolic and redox processes under normal cellular conditions, and as master transcription factor during integrated stress response (ISR). Binds to asymmetric CRE's as a heterodimer and to palindromic CRE's as a homodimer. Core effector of the ISR, which is required for adaptation to various stress such as endoplasmic reticulum (ER) stress, amino acid starvation, mitochondrial stress or oxidative stress. During ISR, ATF4 translation is induced via an alternative ribosome translation re-initiation mechanism in response to EIF2S1/eIF-2-alpha phosphorylation, and stress-induced ATF4 acts as a master transcription factor of stress-responsive genes in order to promote cell recovery. Promotes the transcription of genes linked to amino acid sufficiency and resistance to oxidative stress to protect cells against metabolic consequences of ER oxidation. Activates the transcription of NLRP1, possibly in concert with other factors in response to ER stress. Activates the transcription of asparagine synthetase (ASNS) in response to amino acid deprivation or ER stress. However, when associated with DDIT3/CHOP, the transcriptional activation of the ASNS gene is inhibited in response to amino acid deprivation. Together with DDIT3/CHOP, mediates programmed cell death by promoting the expression of genes involved in cellular amino acid metabolic processes, mRNA translation and the terminal unfolded protein response (terminal UPR), a cellular response that elicits programmed cell death when ER stress is prolonged and unresolved. Activates the expression of COX7A2L/SCAF1 downstream of the EIF2AK3/PERK-mediated unfolded protein response, thereby promoting formation of respiratory chain supercomplexes and increasing mitochondrial oxidative phosphorylation. Together with DDIT3/CHOP, activates the transcription of the IRS-regulator TRIB3 and promotes ER stress-induced neuronal cell death by regulating the expression of BBC3/PUMA in response to ER stress. May cooperate with the UPR transcriptional regulator QRICH1 to regulate ER protein homeostasis which is critical for cell viability in response to ER stress. In the absence of stress, ATF4 translation is at low levels and it is required for normal metabolic processes such as embryonic lens formation, fetal liver hematopoiesis, bone development and synaptic plasticity. Acts as a regulator of osteoblast differentiation in response to phosphorylation by RPS6KA3/RSK2: phosphorylation in osteoblasts enhances transactivation activity and promotes expression of osteoblast-specific genes and post-transcriptionally regulates the synthesis of Type I collagen, the main constituent of the bone matrix. Cooperates with FOXO1 in osteoblasts to regulate glucose homeostasis through suppression of beta-cell production and decrease in insulin production. Activates transcription of SIRT4. Regulates the circadian expression of the core clock component PER2 and the serotonin transporter SLC6A4. Binds in a circadian time-dependent manner to the cAMP response elements (CRE) in the SLC6A4 and PER2 promoters and periodically activates the transcription of these genes. Mainly acts as a transcriptional activator in cellular stress adaptation, but it can also act as a transcriptional repressor: acts as a regulator of synaptic plasticity by repressing transcription, thereby inhibiting induction and maintenance of long-term memory. Regulates synaptic functions via interaction with DISC1 in neurons, which inhibits ATF4 transcription factor activity by disrupting ATF4 dimerization and DNA-binding. The protein is Cyclic AMP-dependent transcription factor ATF-4 of Bos taurus (Bovine).